Consider the following 362-residue polypeptide: MSIEINNISKYFGRTQVLSDITLNVFSGEMVALLGPSGSGKTTLLRIIAGLEQQTAGKLSFHGQDVSRMHAKDRQVGFVFQHYALFRHMTVFDNVAFGLTVLPRRRRPNMAAIRRKVMELLEMVQLTHFAERYPSQLSGGQKQRVALARALAVEPQILLLDEPFGALDAQVRMELRRWLRQLHEELKFTSVFVTHDQEEAMEVADRVVVMRQGNIEQVGTPQEVWRYPASRFVMEFLGEVNHFSGEIKGSQLLIGGQHLPLNVTPIHQGNVDVFLRPWDIMMNSQPTLSSPLPVQVTEVSPRGHFWQLSVQPLGWHHESVAVVWFDETSVPTRGNRYFIGGTEARLYAGDKQLQTLSLAQTA.

The ABC transporter domain occupies 3–237 (IEINNISKYF…PASRFVMEFL (235 aa)). Residue 35-42 (GPSGSGKT) participates in ATP binding.

Belongs to the ABC transporter superfamily. Sulfate/tungstate importer (TC 3.A.1.6) family. The complex is composed of two ATP-binding proteins (CysA), two transmembrane proteins (CysT and CysW) and a solute-binding protein (CysP).

The protein localises to the cell inner membrane. The enzyme catalyses sulfate(out) + ATP + H2O = sulfate(in) + ADP + phosphate + H(+). It catalyses the reaction thiosulfate(out) + ATP + H2O = thiosulfate(in) + ADP + phosphate + H(+). Functionally, part of the ABC transporter complex CysAWTP involved in sulfate/thiosulfate import. Responsible for energy coupling to the transport system. This Photorhabdus laumondii subsp. laumondii (strain DSM 15139 / CIP 105565 / TT01) (Photorhabdus luminescens subsp. laumondii) protein is Sulfate/thiosulfate import ATP-binding protein CysA.